The chain runs to 619 residues: Auxin efflux carrier component 7 (619 aa).

Topologically, residues 1–7 are extracellular; that stretch reads MITWHDL. Residues 8–28 traverse the membrane as a helical segment; sequence YTVLTAVIPLYVAMILAYGSV. The Cytoplasmic segment spans residues 29-38; the sequence is RWWKIFSPDQ. A helical transmembrane segment spans residues 39–59; sequence CSGINRFVAIFAVPLLSFHFI. V51 provides a ligand contact to (indol-3-yl)acetate. Residues 60–71 lie on the Extracellular side of the membrane; that stretch reads SSNNPYAMNLRF. Residues 72–92 traverse the membrane as a helical segment; sequence IAADTLQKLIMLTLLIIWANF. At 93-101 the chain is on the cytoplasmic side; that stretch reads TRSGSLEWS. Residues 102-122 form a helical membrane-spanning segment; sequence ITIFSLSTLPNTLVMGIPLLI. (indol-3-yl)acetate is bound by residues N112 and L114. Topologically, residues 123–131 are extracellular; sequence AMYGEYSGS. A helical membrane pass occupies residues 132–152; the sequence is LMVQIVVLQCIIWYTLLLFLF. Y145 is a binding site for (indol-3-yl)acetate. Over 153–479 the chain is Cytoplasmic; sequence EYRGAKILIM…LIRNPNTYSS (327 aa). A phosphoserine mark is found at S229, S246, and S286. A disordered region spans residues 306–340; the sequence is GAPGSYPAPNPEFSTGNKTGSKAPKENHHHVGKSN. T320 is subject to Phosphothreonine. S357 is subject to Phosphoserine. The disordered stretch occupies residues 393 to 413; it reads HTQNGENKAGPMNGDYGGEEE. The helical transmembrane segment at 480 to 500 threads the bilayer; sequence LIGLIWALVAFRWDVAMPKII. Topologically, residues 501–503 are extracellular; sequence QQS. The chain crosses the membrane as a helical span at residues 504–524; the sequence is ISILSDAGLGMAMFSLGLFMA. Topologically, residues 525–538 are cytoplasmic; the sequence is LQPKLIACGNSTAT. A helical transmembrane segment spans residues 539–559; that stretch reads FAMAVRFFTGPAVMAVAAMAI. Over 560 to 564 the chain is Extracellular; sequence GLRGD. The chain crosses the membrane as a helical span at residues 565–585; the sequence is LLRVAIVQAALPQGIVPFVFA. (indol-3-yl)acetate is bound by residues I579 and V580. Over 586–598 the chain is Cytoplasmic; it reads KEYNVHPAILSTG. A helical membrane pass occupies residues 599 to 619; the sequence is VIFGMLIALPITLVYYILLGL.

Belongs to the auxin efflux carrier (TC 2.A.69.1) family. In terms of assembly, homodimer.

It localises to the cell membrane. Acts as a component of the auxin efflux carrier. Mediates the initial auxin gradient which contributes to the establishment of the apical-basal axis in early embryogenesis. Together with PIN3 and PIN4, involved in the connective auxin transport (CAT) that ensures communication across the shoot system, and modulates strigolactone-mediated shoot branching control. The abcb19 pin3 pin4 pin7 quadruple mutant exhibits an additive phenotype on strigolactone-mediated bud outgrowth responses and shoot branching control. This chain is Auxin efflux carrier component 7, found in Arabidopsis thaliana (Mouse-ear cress).